Reading from the N-terminus, the 341-residue chain is MPSIRLADLAQQLDAELHGDGDIVITGVASMQSAQTGHITFMVNPKYREHLGLCQASAVVMTQDDLPFAKSAALVVKNPYLTYARMAQILDTTPQPAQNIAPSAVIDATAKLGNNVSIGANAVIESGVELGDNVIIGAGCFVGKNSKIGAGSRLWANVTIYHEIQIGQNCLIQSGTVVGADGFGYANDRGNWVKIPQIGRVIIGDRVEIGACTTIDRGALDDTVIGNGVIIDNQCQIAHNVVIGDNTAVAGGVIMAGSLKIGRYCMIGGASVINGHMEICDKVTVTGMGMVMRPITEPGVYSSGIPLQPNKVWRKTAALVMNIDDMSKRLKSLERKVNQQD.

H239 acts as the Proton acceptor in catalysis.

It belongs to the transferase hexapeptide repeat family. LpxD subfamily. Homotrimer.

It catalyses the reaction a UDP-3-O-[(3R)-3-hydroxyacyl]-alpha-D-glucosamine + a (3R)-hydroxyacyl-[ACP] = a UDP-2-N,3-O-bis[(3R)-3-hydroxyacyl]-alpha-D-glucosamine + holo-[ACP] + H(+). The catalysed reaction is UDP-3-O-[(3R)-3-hydroxytetradecanoyl]-alpha-D-glucosamine + (3R)-hydroxytetradecanoyl-[ACP] = UDP-2-N,3-O-bis[(3R)-3-hydroxytetradecanoyl]-alpha-D-glucosamine + holo-[ACP] + H(+). The protein operates within glycolipid biosynthesis; lipid IV(A) biosynthesis; lipid IV(A) from (3R)-3-hydroxytetradecanoyl-[acyl-carrier-protein] and UDP-N-acetyl-alpha-D-glucosamine: step 3/6. Catalyzes the N-acylation of UDP-3-O-(hydroxytetradecanoyl)glucosamine using 3-hydroxytetradecanoyl-ACP as the acyl donor. Is involved in the biosynthesis of lipid A, a phosphorylated glycolipid that anchors the lipopolysaccharide to the outer membrane of the cell. This Escherichia coli O157:H7 protein is UDP-3-O-(3-hydroxymyristoyl)glucosamine N-acyltransferase.